The following is a 328-amino-acid chain: Interferon regulatory factor 1 (328 aa).

Positions 5-113 (RMRMRPWLEM…SAVRVYRMLP (109 aa)) form a DNA-binding region, IRF tryptophan pentad repeat. N6-acetyllysine is present on Lys-78. Positions 92-164 (EEVKDQSRNK…STLPDDHSSY (73 aa)) are disordered. Residues 141 to 157 (GDSSPDTLSDGLSSSTL) show a composition bias toward low complexity. Residues Lys-276 and Lys-300 each participate in a glycyl lysine isopeptide (Lys-Gly) (interchain with G-Cter in SUMO) cross-link.

The protein belongs to the IRF family. In terms of assembly, monomer. Homodimer. Interacts with EP300. Interacts with MYD88. Interacts with PIAS3. Interacts with SPOP. In terms of processing, phosphorylated by CK2 and this positively regulates its activity. Post-translationally, sumoylation represses the transcriptional activity and displays enhanced resistance to protein degradation. Sumoylated by UBE2I/UBC9 and SUMO1. Inactivates the tumor suppressor activity. Elevated levels in tumor cells. Major site is Lys-276. Sumoylation is enhanced by PIAS3. Desumoylated by SENP1 in tumor cells and appears to compete with ubiquitination on C-terminal sites. Ubiquitinated in a SPOP-depedent manner. Appears to compete with sumoylation on C-terminal sites.

It is found in the nucleus. The protein resides in the cytoplasm. Activated by MYD88. Transcriptional regulator which displays a remarkable functional diversity in the regulation of cellular responses. Regulates transcription of IFN and IFN-inducible genes, host response to viral and bacterial infections, regulation of many genes expressed during hematopoiesis, inflammation, immune responses and cell proliferation and differentiation, regulation of the cell cycle and induction of growth arrest and programmed cell death following DNA damage. Stimulates both innate and acquired immune responses through the activation of specific target genes and can act as a transcriptional activator and repressor regulating target genes by binding to an interferon-stimulated response element (ISRE) in their promoters. Has an essentail role in IFNG-dependent immunity to mycobacteria. Binds to a consensus sequence in gene promoters. Its target genes for transcriptional activation activity include: genes involved in anti-viral response, such as IFN-alpha/beta, RIGI, TNFSF10/TRAIL, ZBP1, OAS1/2, PIAS1/GBP, EIF2AK2/PKR and RSAD2/viperin; antibacterial response, such as GBP2, GBP5 and NOS2/INOS; anti-proliferative response, such as p53/TP53, LOX and CDKN1A; apoptosis, such as BBC3/PUMA, CASP1, CASP7 and CASP8; immune response, such as IL7, IL12A/B and IL15, PTGS2/COX2 and CYBB; DNA damage responses and DNA repair, such as POLQ/POLH; MHC class I expression, such as TAP1, PSMB9/LMP2, PSME1/PA28A, PSME2/PA28B and B2M and MHC class II expression, such as CIITA; metabolic enzymes, such as ACOD1/IRG1. Represses genes involved in anti-proliferative response, such as BIRC5/survivin, CCNB1, CCNE1, CDK1, CDK2 and CDK4 and in immune response, such as FOXP3, IL4, ANXA2 and TLR4. Stimulates p53/TP53-dependent transcription through enhanced recruitment of EP300 leading to increased acetylation of p53/TP53. Plays an important role in immune response directly affecting NK maturation and activity, macrophage production of IL12, Th1 development and maturation of CD8+ T-cells. Also implicated in the differentiation and maturation of dendritic cells and in the suppression of regulatory T (Treg) cells development. Acts as a tumor suppressor and plays a role not only in antagonism of tumor cell growth but also in stimulating an immune response against tumor cells. The polypeptide is Interferon regulatory factor 1 (Irf1) (Rattus norvegicus (Rat)).